Here is a 420-residue protein sequence, read N- to C-terminus: Odorant receptor 63a (420 aa).

Over Met-1 to Arg-43 the chain is Cytoplasmic. Residues Ile-44–Leu-64 traverse the membrane as a helical segment. Residues Ala-65–Glu-76 lie on the Extracellular side of the membrane. A helical membrane pass occupies residues Thr-77 to Ala-97. The Cytoplasmic segment spans residues His-98–Gln-150. The chain crosses the membrane as a helical span at residues Ile-151–Val-171. At Ile-172–Cys-217 the chain is on the extracellular side. Residues Ser-218–Leu-238 form a helical membrane-spanning segment. At His-239–Gln-296 the chain is on the cytoplasmic side. The helical transmembrane segment at Phe-297–Asn-317 threads the bilayer. Asn-318 is a glycosylation site (N-linked (GlcNAc...) asparagine). The Extracellular portion of the chain corresponds to Asn-318–Ser-320. The helical transmembrane segment at Ile-321 to Cys-341 threads the bilayer. At Tyr-342–Leu-387 the chain is on the cytoplasmic side. Residues Asp-388–Gly-408 form a helical membrane-spanning segment. Residues Gln-409–Lys-420 lie on the Extracellular side of the membrane.

This sequence belongs to the insect chemoreceptor superfamily. Heteromeric odorant receptor channel (TC 1.A.69) family. Or63a subfamily. Interacts with Orco. Complexes exist early in the endomembrane system in olfactory sensory neurons (OSNs), coupling these complexes to the conserved ciliary trafficking pathway.

It localises to the cell membrane. Odorant receptor which mediates acceptance or avoidance behavior, depending on its substrates. The odorant receptor repertoire encodes a large collection of odor stimuli that vary widely in identity, intensity, and duration. May form a complex with Orco to form odorant-sensing units, providing sensitive and prolonged odorant signaling and calcium permeability. Involved in the behavioral responses to butyl acetate, isoamyl acetate, and hexanoic acid. The chain is Odorant receptor 63a (Or63a) from Drosophila melanogaster (Fruit fly).